A 671-amino-acid polypeptide reads, in one-letter code: DNA ligase (671 aa).

NAD(+) is bound by residues 32-36 (DAEYD), 81-82 (SL), and Glu-113. The active-site N6-AMP-lysine intermediate is Lys-115. Residues Arg-136, Glu-173, Lys-290, and Lys-314 each coordinate NAD(+). The Zn(2+) site is built by Cys-408, Cys-411, Cys-426, and Cys-432. Positions 593 to 671 (EIDSPFAGKT…EAEMLRLLGS (79 aa)) constitute a BRCT domain.

The protein belongs to the NAD-dependent DNA ligase family. LigA subfamily. Mg(2+) is required as a cofactor. Mn(2+) serves as cofactor.

The enzyme catalyses NAD(+) + (deoxyribonucleotide)n-3'-hydroxyl + 5'-phospho-(deoxyribonucleotide)m = (deoxyribonucleotide)n+m + AMP + beta-nicotinamide D-nucleotide.. Its function is as follows. DNA ligase that catalyzes the formation of phosphodiester linkages between 5'-phosphoryl and 3'-hydroxyl groups in double-stranded DNA using NAD as a coenzyme and as the energy source for the reaction. It is essential for DNA replication and repair of damaged DNA. The sequence is that of DNA ligase from Shigella flexneri serotype 5b (strain 8401).